Here is a 339-residue protein sequence, read N- to C-terminus: Phenylalanine--tRNA ligase alpha subunit (339 aa).

E254 lines the Mg(2+) pocket.

Belongs to the class-II aminoacyl-tRNA synthetase family. Phe-tRNA synthetase alpha subunit type 1 subfamily. As to quaternary structure, tetramer of two alpha and two beta subunits. The cofactor is Mg(2+).

The protein resides in the cytoplasm. The catalysed reaction is tRNA(Phe) + L-phenylalanine + ATP = L-phenylalanyl-tRNA(Phe) + AMP + diphosphate + H(+). This is Phenylalanine--tRNA ligase alpha subunit from Dictyoglomus turgidum (strain DSM 6724 / Z-1310).